Consider the following 502-residue polypeptide: Protein nucleotidyltransferase YdiU (502 aa).

8 residues coordinate ATP: Gly-98, Gly-100, Arg-101, Lys-121, Asp-133, Gly-134, Arg-184, and Arg-191. Asp-260 functions as the Proton acceptor in the catalytic mechanism. Asn-261 and Asp-270 together coordinate Mg(2+). Residue Asp-270 participates in ATP binding.

This sequence belongs to the SELO family. The cofactor is Mg(2+). Mn(2+) serves as cofactor.

It carries out the reaction L-seryl-[protein] + ATP = 3-O-(5'-adenylyl)-L-seryl-[protein] + diphosphate. It catalyses the reaction L-threonyl-[protein] + ATP = 3-O-(5'-adenylyl)-L-threonyl-[protein] + diphosphate. The enzyme catalyses L-tyrosyl-[protein] + ATP = O-(5'-adenylyl)-L-tyrosyl-[protein] + diphosphate. The catalysed reaction is L-histidyl-[protein] + UTP = N(tele)-(5'-uridylyl)-L-histidyl-[protein] + diphosphate. It carries out the reaction L-seryl-[protein] + UTP = O-(5'-uridylyl)-L-seryl-[protein] + diphosphate. It catalyses the reaction L-tyrosyl-[protein] + UTP = O-(5'-uridylyl)-L-tyrosyl-[protein] + diphosphate. Functionally, nucleotidyltransferase involved in the post-translational modification of proteins. It can catalyze the addition of adenosine monophosphate (AMP) or uridine monophosphate (UMP) to a protein, resulting in modifications known as AMPylation and UMPylation. The polypeptide is Protein nucleotidyltransferase YdiU (Rhizobium rhizogenes (strain K84 / ATCC BAA-868) (Agrobacterium radiobacter)).